The sequence spans 542 residues: Chaperonin GroEL 2 (542 aa).

Residues 30–33, K51, 87–91, G415, and D495 each bind ATP; these read TLGP and DGTTT.

Belongs to the chaperonin (HSP60) family. As to quaternary structure, forms a cylinder of 14 subunits composed of two heptameric rings stacked back-to-back. Interacts with the co-chaperonin GroES.

It localises to the cytoplasm. It catalyses the reaction ATP + H2O + a folded polypeptide = ADP + phosphate + an unfolded polypeptide.. Its function is as follows. Together with its co-chaperonin GroES, plays an essential role in assisting protein folding. The GroEL-GroES system forms a nano-cage that allows encapsulation of the non-native substrate proteins and provides a physical environment optimized to promote and accelerate protein folding. The protein is Chaperonin GroEL 2 of Methylococcus capsulatus (strain ATCC 33009 / NCIMB 11132 / Bath).